Reading from the N-terminus, the 462-residue chain is Exodeoxyribonuclease 7 large subunit (462 aa).

It belongs to the XseA family. Heterooligomer composed of large and small subunits.

Its subcellular location is the cytoplasm. The enzyme catalyses Exonucleolytic cleavage in either 5'- to 3'- or 3'- to 5'-direction to yield nucleoside 5'-phosphates.. Bidirectionally degrades single-stranded DNA into large acid-insoluble oligonucleotides, which are then degraded further into small acid-soluble oligonucleotides. This chain is Exodeoxyribonuclease 7 large subunit, found in Pectobacterium atrosepticum (strain SCRI 1043 / ATCC BAA-672) (Erwinia carotovora subsp. atroseptica).